Here is a 291-residue protein sequence, read N- to C-terminus: Porphobilinogen deaminase (291 aa).

C237 is modified (S-(dipyrrolylmethanemethyl)cysteine).

The protein belongs to the HMBS family. As to quaternary structure, monomer. The cofactor is dipyrromethane.

It carries out the reaction 4 porphobilinogen + H2O = hydroxymethylbilane + 4 NH4(+). It participates in porphyrin-containing compound metabolism; protoporphyrin-IX biosynthesis; coproporphyrinogen-III from 5-aminolevulinate: step 2/4. In terms of biological role, tetrapolymerization of the monopyrrole PBG into the hydroxymethylbilane pre-uroporphyrinogen in several discrete steps. This Clostridium acetobutylicum (strain ATCC 824 / DSM 792 / JCM 1419 / IAM 19013 / LMG 5710 / NBRC 13948 / NRRL B-527 / VKM B-1787 / 2291 / W) protein is Porphobilinogen deaminase.